The primary structure comprises 481 residues: Vanillin dehydrogenase (481 aa).

228–233 (GSTHVG) lines the NAD(+) pocket. Residues E250 and C284 contribute to the active site.

It belongs to the aldehyde dehydrogenase family.

It carries out the reaction vanillin + NAD(+) + H2O = vanillate + NADH + 2 H(+). In terms of biological role, catalyzes the NAD-dependent oxidation of vanillin to vanillic acid. This chain is Vanillin dehydrogenase (vdh), found in Pseudomonas sp. (strain HR199 / DSM 7063).